The following is a 347-amino-acid chain: Probable arabinogalactan endo-beta-1,4-galactanase A (347 aa).

Residues 1-16 (MLFSYLLATLPLLANA) form the signal peptide. Residue Glu150 is the Proton donor of the active site. Residue Glu260 is the Nucleophile of the active site.

This sequence belongs to the glycosyl hydrolase 53 family.

The protein resides in the secreted. The enzyme catalyses The enzyme specifically hydrolyzes (1-&gt;4)-beta-D-galactosidic linkages in type I arabinogalactans.. In terms of biological role, endogalactanase involved in the degradation of plant cell wall polysaccharides, and more particularly of hairy regions of pectin. This chain is Probable arabinogalactan endo-beta-1,4-galactanase A (galA), found in Aspergillus oryzae (strain ATCC 42149 / RIB 40) (Yellow koji mold).